We begin with the raw amino-acid sequence, 472 residues long: Cannabinoid receptor 1 (472 aa).

Over 1–116 (MKSILDGLAD…CFMILNPSQQ (116 aa)) the chain is Extracellular. Residues 2–23 (KSILDGLADTTFRTITTDLLYV) are required for mitochondrial localization. Residues N77 and N83 are each glycosylated (N-linked (GlcNAc...) asparagine). A helical transmembrane segment spans residues 117 to 142 (LAIAVLSLTLGTFTVLENLLVLCVIL). The Cytoplasmic portion of the chain corresponds to 143–154 (HSRSLRCRPSYH). The chain crosses the membrane as a helical span at residues 155–175 (FIGSLAVADLLGSVIFVYSFV). The Extracellular segment spans residues 176–187 (DFHVFHRKDSPN). Residues 188 to 212 (VFLFKLGGVTASFTASVGSLFLTAI) traverse the membrane as a helical segment. Topologically, residues 213–232 (DRYISIHRPLAYKKIVTRPK) are cytoplasmic. Residues 233 to 255 (AVVAFCLMWTIAIVIAVLPLLGW) form a helical membrane-spanning segment. Residues 256 to 273 (NCKKLQSVCSDIFPLIDE) lie on the Extracellular side of the membrane. Residues 274 to 299 (TYLMFWIGVTSVLLLFIVYAYMYILW) form a helical membrane-spanning segment. Residues 300–344 (KAHIHAVRMIQRGTQKSIIIHTSEDGKVQVTRPDQARMDIRLAKT) are Cytoplasmic-facing. A helical membrane pass occupies residues 345-365 (LVLILVVLIICWGPLLAIMVY). The Extracellular segment spans residues 366–377 (DVFGKMNKLIKT). A helical transmembrane segment spans residues 378 to 399 (VFAFCSMLCLLNSTVNPIIYAL). Residues 400 to 472 (RSKDLRHAFR…VSTNTSAKAL (73 aa)) lie on the Cytoplasmic side of the membrane. C415 carries S-palmitoyl cysteine lipidation. 2 positions are modified to phosphoserine: S425 and S429.

This sequence belongs to the G-protein coupled receptor 1 family. Interacts (via C-terminus) with CNRIP1; this interaction attenuates constitutive, but not agonist-dependent, inhibition of voltage-gated Ca(2+) channels in neurons. Associates with G protein alpha subunits, including G(i) alpha-1/GNAI1, G(i) alpha-3/GNAI3 and G(o)-alpha/GNAO1; palmitoylation is important for interaction with GNAI3 and GNAO1. Post-translationally, palmitoylation at Cys-415 is important for recruitment at plasma membrane and lipid rafts and association with G protein alpha subunits. Expressed in cerebral arterial muscle cells and cerebral cortex (at protein level).

It is found in the cell membrane. Its subcellular location is the membrane raft. The protein resides in the mitochondrion outer membrane. It localises to the cell projection. The protein localises to the axon. It is found in the presynapse. With respect to regulation, hemopressin, a peptide derived from hemoglobin subunit alpha (HBA1 and/or HBA2), acts as an antagonist peptide: hemopressin-binding efficiently blocks cannabinoid receptor CNR1 and subsequent signaling. Functionally, G-protein coupled receptor for endogenous cannabinoids (eCBs), including N-arachidonoylethanolamide (also called anandamide or AEA) and 2-arachidonoylglycerol (2-AG), as well as phytocannabinoids, such as delta(9)-tetrahydrocannabinol (THC). Mediates many cannabinoid-induced effects, acting, among others, on food intake, memory loss, gastrointestinal motility, catalepsy, ambulatory activity, anxiety, chronic pain. Signaling typically involves reduction in cyclic AMP. In the hypothalamus, may have a dual effect on mitochondrial respiration depending upon the agonist dose and possibly upon the cell type. Increases respiration at low doses, while decreases respiration at high doses. At high doses, CNR1 signal transduction involves G-protein alpha-i protein activation and subsequent inhibition of mitochondrial soluble adenylate cyclase, decrease in cyclic AMP concentration, inhibition of protein kinase A (PKA)-dependent phosphorylation of specific subunits of the mitochondrial electron transport system, including NDUFS2. In the hypothalamus, inhibits leptin-induced reactive oxygen species (ROS) formation and mediates cannabinoid-induced increase in SREBF1 and FASN gene expression. In response to cannabinoids, drives the release of orexigenic beta-endorphin, not that of melanocyte-stimulating hormone alpha/alpha-MSH, from hypothalamic POMC neurons, hence promoting food intake. In the hippocampus, regulates cellular respiration and energy production in response to cannabinoids. Involved in cannabinoid-dependent depolarization-induced suppression of inhibition (DSI), a process in which depolarization of CA1 postsynaptic pyramidal neurons mobilizes eCBs, which retrogradely activate presynaptic CB1 receptors, transiently decreasing GABAergic inhibitory neurotransmission. Also reduces excitatory synaptic transmission. In superior cervical ganglions and cerebral vascular smooth muscle cells, inhibits voltage-gated Ca(2+) channels in a constitutive, as well as agonist-dependent manner. In cerebral vascular smooth muscle cells, inhibition of voltage-gated Ca(2+) channels leads to vasodilation and decrease in vascular tone. Induces leptin production in adipocytes and reduces LRP2-mediated leptin clearance in the kidney, hence participating in hyperleptinemia. In adipose tissue, CNR1 signaling leads to increased expression of SREBF1, ACACA and FASN genes. In the liver, activation by endocannabinoids leads to increased de novo lipogenesis and reduced fatty acid catabolism, associated with increased expression of SREBF1/SREBP-1, GCK, ACACA, ACACB and FASN genes. May also affect de novo cholesterol synthesis and HDL-cholesteryl ether uptake. Peripherally modulates energy metabolism. In high carbohydrate diet-induced obesity, may decrease the expression of mitochondrial dihydrolipoyl dehydrogenase/DLD in striated muscles, as well as that of selected glucose/ pyruvate metabolic enzymes, hence affecting energy expenditure through mitochondrial metabolism. In response to cannabinoid anandamide, elicits a pro-inflammatory response in macrophages, which involves NLRP3 inflammasome activation and IL1B and IL18 secretion. In macrophages infiltrating pancreatic islets, this process may participate in the progression of type-2 diabetes and associated loss of pancreatic beta-cells. This is Cannabinoid receptor 1 (CNR1) from Felis catus (Cat).